We begin with the raw amino-acid sequence, 318 residues long: N-succinylornithine carbamoyltransferase (318 aa).

Carbamoyl phosphate-binding positions include 47–50 (SLRT), Trp75, and Arg110. Residue Glu142 participates in N(2)-succinyl-L-ornithine binding. Carbamoyl phosphate is bound at residue 147-150 (HPLQ). N(2)-succinyl-L-ornithine contacts are provided by His176 and Lys236. Residue 274–275 (CL) participates in carbamoyl phosphate binding. Arg278 is a binding site for N(2)-succinyl-L-ornithine. Arg302 contributes to the carbamoyl phosphate binding site.

Belongs to the aspartate/ornithine carbamoyltransferase superfamily. SOTCase family. As to quaternary structure, homotrimer.

It catalyses the reaction N(2)-succinyl-L-ornithine + carbamoyl phosphate = N(2)-succinyl-L-citrulline + phosphate + H(+). It participates in amino-acid biosynthesis; L-arginine biosynthesis. Functionally, catalyzes the transfer of the carbamoyl group from carbamoyl phosphate to the delta-amino group of N(2)-succinyl-L-ornithine to produce N(2)-succinyl-L-citrulline. Is essential for arginine biosynthesis. Has no activity with either L-ornithine or L-aspartate as substrate. Also has no detectable AOTCase activity, being unable to convert N(2)-acetyl-L-ornithine to N(2)-acetyl-L-citrulline. This chain is N-succinylornithine carbamoyltransferase, found in Bacteroides fragilis (strain 638R).